Consider the following 459-residue polypeptide: V-type ATP synthase beta chain (459 aa).

The protein belongs to the ATPase alpha/beta chains family.

Its function is as follows. Produces ATP from ADP in the presence of a proton gradient across the membrane. The V-type beta chain is a regulatory subunit. This chain is V-type ATP synthase beta chain, found in Thermoanaerobacter sp. (strain X514).